Here is a 576-residue protein sequence, read N- to C-terminus: Alpha-1,3-arabinosyltransferase XAT3 (576 aa).

Over 1–19 (MKAGERPKLVRGVRQESRR) the chain is Cytoplasmic. Residues 20-40 (FRLLVIVVGFFLVSLTFVFVS) form a helical; Signal-anchor for type II membrane protein membrane-spanning segment. At 41–576 (KPDAILFSLN…LLEALDNLNP (536 aa)) the chain is on the lumenal side. Residues 64 to 171 (IQQKVNEPSG…KHKVTLPTVS (108 aa)) are disordered. Basic and acidic residues-rich tracts occupy residues 73–98 (GESR…DAKP), 126–138 (THNK…KSHQ), and 147–163 (GESK…EQKH). Residues Asn172, Asn375, and Asn443 are each glycosylated (N-linked (GlcNAc...) asparagine).

This sequence belongs to the glycosyltransferase 61 family.

It is found in the golgi apparatus membrane. It functions in the pathway glycan metabolism. Glycosyltransferase involved in the arabinosylation of xylan, the major hemicellulose (non-cellulosic component) of primary and secondary walls of angiosperms. Possesses alpha-1,3-arabinosyltransferase activity, transferring an arabinofuranose residue to the xylan backbone. In Oryza sativa subsp. japonica (Rice), this protein is Alpha-1,3-arabinosyltransferase XAT3.